The following is a 250-amino-acid chain: Ditrans,polycis-undecaprenyl-diphosphate synthase ((2E,6E)-farnesyl-diphosphate specific) (250 aa).

Asp-27 is a catalytic residue. Residue Asp-27 coordinates Mg(2+). Residues 28-31 (GNGR), Trp-32, Arg-40, His-44, and 72-74 (SSE) each bind substrate. Catalysis depends on Asn-75, which acts as the Proton acceptor. Positions 76, 78, and 195 each coordinate substrate. His-200 is a Mg(2+) binding site. 201–203 (RIS) provides a ligand contact to substrate. Glu-214 contributes to the Mg(2+) binding site.

The protein belongs to the UPP synthase family. Homodimer. It depends on Mg(2+) as a cofactor.

The enzyme catalyses 8 isopentenyl diphosphate + (2E,6E)-farnesyl diphosphate = di-trans,octa-cis-undecaprenyl diphosphate + 8 diphosphate. In terms of biological role, catalyzes the sequential condensation of isopentenyl diphosphate (IPP) with (2E,6E)-farnesyl diphosphate (E,E-FPP) to yield (2Z,6Z,10Z,14Z,18Z,22Z,26Z,30Z,34E,38E)-undecaprenyl diphosphate (di-trans,octa-cis-UPP). UPP is the precursor of glycosyl carrier lipid in the biosynthesis of bacterial cell wall polysaccharide components such as peptidoglycan and lipopolysaccharide. The protein is Ditrans,polycis-undecaprenyl-diphosphate synthase ((2E,6E)-farnesyl-diphosphate specific) of Blochmanniella floridana.